A 259-amino-acid polypeptide reads, in one-letter code: Potassium/proton antiporter CemA (259 aa).

Helical transmembrane passes span 47 to 67 (CLLV…EPWV), 136 to 156 (IITH…YLVM), 184 to 204 (ILLA…ELLI), and 219 to 239 (IISS…KYWI).

This sequence belongs to the CemA family.

Its subcellular location is the plastid. The protein resides in the chloroplast inner membrane. The enzyme catalyses K(+)(in) + H(+)(out) = K(+)(out) + H(+)(in). Functionally, contributes to K(+)/H(+) antiport activity by supporting proton efflux to control proton extrusion and homeostasis in chloroplasts in a light-dependent manner to modulate photosynthesis. Prevents excessive induction of non-photochemical quenching (NPQ) under continuous-light conditions. Indirectly promotes efficient inorganic carbon uptake into chloroplasts. The sequence is that of Potassium/proton antiporter CemA from Welwitschia mirabilis (Tree tumbo).